The primary structure comprises 325 residues: Elongation factor Ts, mitochondrial (325 aa).

A mitochondrion-targeting transit peptide spans 1 to 45; it reads MSLLRSLRVFLVARTGSYPAGSLLRQSPQPRHTFYAGPRLSASAS. K76, K133, and K192 each carry N6-succinyllysine. Phosphoserine is present on S270. T324 is subject to Phosphothreonine.

This sequence belongs to the EF-Ts family. In terms of tissue distribution, expressed in all tissues, with the highest levels of expression in skeletal muscle, liver and kidney.

The protein resides in the mitochondrion. Its function is as follows. Associates with the EF-Tu.GDP complex and induces the exchange of GDP to GTP. It remains bound to the aminoacyl-tRNA.EF-Tu.GTP complex up to the GTP hydrolysis stage on the ribosome. This Homo sapiens (Human) protein is Elongation factor Ts, mitochondrial.